Here is a 320-residue protein sequence, read N- to C-terminus: Malate dehydrogenase (320 aa).

NAD(+) is bound by residues 10–15 and D34; that span reads GAGNIG. Substrate is bound by residues R83 and R89. Residues N96 and 119–121 each bind NAD(+); that span reads ITN. 2 residues coordinate substrate: N121 and R152. H176 (proton acceptor) is an active-site residue.

This sequence belongs to the LDH/MDH superfamily. MDH type 3 family.

The catalysed reaction is (S)-malate + NAD(+) = oxaloacetate + NADH + H(+). Its function is as follows. Catalyzes the reversible oxidation of malate to oxaloacetate. The sequence is that of Malate dehydrogenase from Rhizorhabdus wittichii (strain DSM 6014 / CCUG 31198 / JCM 15750 / NBRC 105917 / EY 4224 / RW1) (Sphingomonas wittichii).